Here is a 334-residue protein sequence, read N- to C-terminus: Sensor protein BceS (334 aa).

The Cytoplasmic segment spans residues 1–12 (MIKAFLIERRSW). The helical transmembrane segment at 13–33 (IAAFLFQQALMLFIAFVDPSI) threads the bilayer. Position 34 (serine 34) is a topological domain, extracellular. Residues 35–55 (FGNVLYMVYLCILFFIIFLWF) traverse the membrane as a helical segment. Topologically, residues 56-334 (RYRKETAFYK…RNQFEHVISV (279 aa)) are cytoplasmic. Residues 121–326 (AWIHEVKTPL…VFTLTFPIRN (206 aa)) form the Histidine kinase domain. Residue histidine 124 is modified to Phosphohistidine; by autocatalysis.

Its subcellular location is the cell membrane. The enzyme catalyses ATP + protein L-histidine = ADP + protein N-phospho-L-histidine.. Its function is as follows. Member of the two-component regulatory system BceS/BceR involved in the regulation of bacitracin resistance. Activates BceR in response to extracellular bacitracin. The chain is Sensor protein BceS (bceS) from Bacillus subtilis (strain 168).